An 81-amino-acid chain; its full sequence is Putative CNGA1-overlapping antisense gene protein (81 aa).

As to expression, expressed in brain, notably in regions involved in long-term potentiation and long-term depression, such as hippocampal CA1 and CA3, dentate gyrus and cerebellar Purkinje layer.

The chain is Putative CNGA1-overlapping antisense gene protein from Homo sapiens (Human).